The chain runs to 276 residues: Undecaprenyl-diphosphatase (276 aa).

8 helical membrane passes run 1–21, 39–59, 84–104, 115–135, 159–179, 190–210, 222–242, and 253–273; these read MSWL…FLPV, AGAS…LVYF, YWLG…GLLF, LWLV…AEYA, LALV…LFLG, FLLA…DAFA, QLLV…AWFL, and FVGY…TGVV.

Belongs to the UppP family.

Its subcellular location is the cell membrane. It carries out the reaction di-trans,octa-cis-undecaprenyl diphosphate + H2O = di-trans,octa-cis-undecaprenyl phosphate + phosphate + H(+). Functionally, catalyzes the dephosphorylation of undecaprenyl diphosphate (UPP). Confers resistance to bacitracin. This is Undecaprenyl-diphosphatase from Mycolicibacterium gilvum (strain PYR-GCK) (Mycobacterium gilvum (strain PYR-GCK)).